The following is a 152-amino-acid chain: UPF0266 membrane protein plu2700 (152 aa).

3 helical membrane passes run 6–26 (IALT…EFVV), 45–65 (IDAL…ITVY), and 67–87 (SRLT…IAYI).

The protein belongs to the UPF0266 family.

The protein localises to the cell inner membrane. This chain is UPF0266 membrane protein plu2700, found in Photorhabdus laumondii subsp. laumondii (strain DSM 15139 / CIP 105565 / TT01) (Photorhabdus luminescens subsp. laumondii).